We begin with the raw amino-acid sequence, 634 residues long: Polyadenylate-binding protein 1A (634 aa).

RRM domains lie at 11 to 89 (ASLY…WSQR), 99 to 175 (GNIF…RFKS), 191 to 268 (TNVY…RAQK), and 294 to 370 (VNLY…LAQR). One can recognise a PABC domain in the interval 541–618 (QEPLTASMLA…AVAVLQAHQA (78 aa)).

This sequence belongs to the polyadenylate-binding protein type-1 family. As to quaternary structure, interacts with ybx1; interaction recruits pabpc1a on C5-methylcytosine (m5C)-containing mRNAs, preventing their degradation.

It is found in the cytoplasm. Binds the poly(A) tail of mRNA. Prevents mRNA deadenylation and confers poly(A) stability. Binds to N6-methyladenosine (m6A)-containing mRNAs. Stimulates the translation of mRNAs to which it is bound, acting, at least in part, with dazl. Involved in the maternal-to-zygotic transition in early embryo via interaction with ybx1: interaction recruits pabpc1a on C5-methylcytosine (m5C)-containing maternal mRNAs, preventing their degradation. This is Polyadenylate-binding protein 1A from Danio rerio (Zebrafish).